The following is a 1873-amino-acid chain: Ankyrin repeat domain-containing protein 31 (1873 aa).

Disordered regions lie at residues 1–27 (MEEG…SDLE) and 361–380 (EPLS…DQET). A compositionally biased stretch (polar residues) spans 361–379 (EPLSNKRNSNSVTNSSDQE). ANK repeat units follow at residues 488–517 (FGEN…NVNQ), 521–550 (AGWT…DVNI), and 554–583 (YQIT…DPLF). The disordered stretch occupies residues 707–740 (TGLRKGNLHNVKDPNTNVPKGIGRRKTQHKRTQV). Over residues 728–737 (IGRRKTQHKR) the composition is skewed to basic residues. ANK repeat units follow at residues 1154 to 1183 (RGES…DVNL), 1187 to 1216 (AGWT…KVNC), and 1220 to 1249 (DGIL…NPNQ). Disordered regions lie at residues 1242–1263 (QNGA…EADD), 1449–1482 (RSEI…SGSM), 1512–1549 (FSGN…PSQP), and 1606–1634 (CDQD…ASES). Basic and acidic residues predominate over residues 1250-1263 (KDQKQKSALDEADD). Polar residues-rich tracts occupy residues 1460–1482 (ELTS…SGSM) and 1515–1525 (NDMNSKQNGSD). Basic and acidic residues predominate over residues 1535-1544 (RHSDGTEKNK). Positions 1621–1632 (KTSSQQSPTGAS) are enriched in polar residues. The region spanning 1683–1778 (KKALNYSTAP…TYLGKELLRY (96 aa)) is the RAMA domain.

In terms of assembly, interacts with REC114; the interaction is direct. Interacts with IHO1.

It is found in the nucleus. The protein resides in the chromosome. Its function is as follows. Required for DNA double-strand breaks (DSBs) formation during meiotic recombination. Regulates the spatial and temporal patterns of pre-DSB recombinosome assembly and recombination activity by acting as a scaffold that anchors REC114 and other factors to specific genomic locations, thereby regulating DSB formation. Plays a key role in recombination in the pseudoautosomal regions of sex chromosomes. In Homo sapiens (Human), this protein is Ankyrin repeat domain-containing protein 31.